The chain runs to 500 residues: Probable cytosol aminopeptidase 1 (500 aa).

2 residues coordinate Mn(2+): Lys263 and Asp268. Lys275 is a catalytic residue. The Mn(2+) site is built by Asp287, Asp346, and Glu348. The active site involves Arg350.

It belongs to the peptidase M17 family. Requires Mn(2+) as cofactor.

The protein resides in the cytoplasm. The catalysed reaction is Release of an N-terminal amino acid, Xaa-|-Yaa-, in which Xaa is preferably Leu, but may be other amino acids including Pro although not Arg or Lys, and Yaa may be Pro. Amino acid amides and methyl esters are also readily hydrolyzed, but rates on arylamides are exceedingly low.. It catalyses the reaction Release of an N-terminal amino acid, preferentially leucine, but not glutamic or aspartic acids.. Presumably involved in the processing and regular turnover of intracellular proteins. Catalyzes the removal of unsubstituted N-terminal amino acids from various peptides. The sequence is that of Probable cytosol aminopeptidase 1 (pepA1) from Shewanella oneidensis (strain ATCC 700550 / JCM 31522 / CIP 106686 / LMG 19005 / NCIMB 14063 / MR-1).